The sequence spans 289 residues: Fatty acid elongase 1 (289 aa).

7 helical membrane passes run 22-42 (VVGY…KLFA), 72-92 (AMVL…STVT), 123-143 (FWIG…IFLV), 152-172 (FLHW…YCVG), 177-197 (IWVA…FAIA), 208-228 (WAPY…FVTL), and 251-271 (LLMY…AHVL). Residues 154–158 (HWYHH) carry the HxxHH motif motif. Catalysis depends on His157, which acts as the Nucleophile. An N-linked (GlcNAc...) asparagine glycan is attached at Asn282.

This sequence belongs to the ELO family.

The protein localises to the endoplasmic reticulum membrane. It carries out the reaction an acyl-CoA + malonyl-CoA + H(+) = a 3-oxoacyl-CoA + CO2 + CoA. It functions in the pathway lipid metabolism; fatty acid biosynthesis. Its function is as follows. Involved in the synthesis of fatty acids. Elongates C4 fatty acids. Required for the normal mitochondrial function, energy metabolism and growth of epimastigotes. In Trypanosoma cruzi (strain CL Brener), this protein is Fatty acid elongase 1.